Here is a 514-residue protein sequence, read N- to C-terminus: 2-isopropylmalate synthase (514 aa).

Residues 5-268 form the Pyruvate carboxyltransferase domain; it reads LIIFDTTLRD…DVGIDTTQIV (264 aa). Mn(2+) is bound by residues D14, H202, H204, and N239. A regulatory domain region spans residues 395 to 514; sequence KFVSLSQHSE…KDDKLNPQRS (120 aa).

The protein belongs to the alpha-IPM synthase/homocitrate synthase family. LeuA type 1 subfamily. As to quaternary structure, homodimer. Mn(2+) is required as a cofactor.

It is found in the cytoplasm. It catalyses the reaction 3-methyl-2-oxobutanoate + acetyl-CoA + H2O = (2S)-2-isopropylmalate + CoA + H(+). Its pathway is amino-acid biosynthesis; L-leucine biosynthesis; L-leucine from 3-methyl-2-oxobutanoate: step 1/4. Catalyzes the condensation of the acetyl group of acetyl-CoA with 3-methyl-2-oxobutanoate (2-ketoisovalerate) to form 3-carboxy-3-hydroxy-4-methylpentanoate (2-isopropylmalate). In Burkholderia multivorans (strain ATCC 17616 / 249), this protein is 2-isopropylmalate synthase.